The chain runs to 292 residues: Elongation factor Ts (292 aa).

Residues 82–85 (TDFV) form an involved in Mg(2+) ion dislocation from EF-Tu region.

Belongs to the EF-Ts family.

The protein localises to the cytoplasm. In terms of biological role, associates with the EF-Tu.GDP complex and induces the exchange of GDP to GTP. It remains bound to the aminoacyl-tRNA.EF-Tu.GTP complex up to the GTP hydrolysis stage on the ribosome. The polypeptide is Elongation factor Ts (Bordetella avium (strain 197N)).